A 436-amino-acid polypeptide reads, in one-letter code: UDP-N-acetylmuramate--L-alanine ligase (436 aa).

An ATP-binding site is contributed by 108-114 (GAHGKTS).

Belongs to the MurCDEF family.

It is found in the cytoplasm. The catalysed reaction is UDP-N-acetyl-alpha-D-muramate + L-alanine + ATP = UDP-N-acetyl-alpha-D-muramoyl-L-alanine + ADP + phosphate + H(+). It participates in cell wall biogenesis; peptidoglycan biosynthesis. In terms of biological role, cell wall formation. This chain is UDP-N-acetylmuramate--L-alanine ligase, found in Bacillus cereus (strain AH187).